Consider the following 160-residue polypeptide: Ribosomal RNA large subunit methyltransferase H (160 aa).

S-adenosyl-L-methionine-binding positions include leucine 77, glycine 109, and 128 to 133; that span reads FGRITL.

The protein belongs to the RNA methyltransferase RlmH family. As to quaternary structure, homodimer.

It is found in the cytoplasm. The catalysed reaction is pseudouridine(1915) in 23S rRNA + S-adenosyl-L-methionine = N(3)-methylpseudouridine(1915) in 23S rRNA + S-adenosyl-L-homocysteine + H(+). Its function is as follows. Specifically methylates the pseudouridine at position 1915 (m3Psi1915) in 23S rRNA. In Oenococcus oeni (strain ATCC BAA-331 / PSU-1), this protein is Ribosomal RNA large subunit methyltransferase H.